A 66-amino-acid chain; its full sequence is MPKLKTKSGAKKRFKVTGTGKVMSAHAGKRHGMIKRTKKQIRQLRGTRVLFKTDGDNIKQYFLPNA.

2 stretches are compositionally biased toward basic residues: residues 1–15 and 27–40; these read MPKL…KRFK and AGKR…TKKQ. Residues 1-40 are disordered; the sequence is MPKLKTKSGAKKRFKVTGTGKVMSAHAGKRHGMIKRTKKQ.

It belongs to the bacterial ribosomal protein bL35 family.

This is Large ribosomal subunit protein bL35 from Rhodopseudomonas palustris (strain BisA53).